The chain runs to 543 residues: Probable ubiquitin-conjugating enzyme E2 26 (543 aa).

A disordered region spans residues 1–21 (MEPDVVEIPPPPLIASGSRTR). Residues 271–431 (NWVKKVQADW…VFLLSLKTMV (161 aa)) enclose the UBC core domain. C357 serves as the catalytic Glycyl thioester intermediate. Residues 514–543 (LAEKPEPPMSNANTENQSKKKTRKRSRSSR) form a disordered region. Basic residues predominate over residues 532–543 (KKKTRKRSRSSR).

It belongs to the ubiquitin-conjugating enzyme family.

The enzyme catalyses S-ubiquitinyl-[E1 ubiquitin-activating enzyme]-L-cysteine + [E2 ubiquitin-conjugating enzyme]-L-cysteine = [E1 ubiquitin-activating enzyme]-L-cysteine + S-ubiquitinyl-[E2 ubiquitin-conjugating enzyme]-L-cysteine.. It functions in the pathway protein modification; protein ubiquitination. Functionally, accepts the ubiquitin from the E1 complex and catalyzes its covalent attachment to other proteins. This chain is Probable ubiquitin-conjugating enzyme E2 26 (UBC26), found in Arabidopsis thaliana (Mouse-ear cress).